The following is a 929-amino-acid chain: Isoleucine--tRNA ligase (929 aa).

Positions 58 to 68 (PYANGDIHIGH) match the 'HIGH' region motif. Residue glutamate 563 participates in L-isoleucyl-5'-AMP binding. A 'KMSKS' region motif is present at residues 605 to 609 (KMSKS). An ATP-binding site is contributed by lysine 608. 4 residues coordinate Zn(2+): cysteine 892, cysteine 895, cysteine 912, and cysteine 915.

Belongs to the class-I aminoacyl-tRNA synthetase family. IleS type 1 subfamily. In terms of assembly, monomer. Requires Zn(2+) as cofactor.

Its subcellular location is the cytoplasm. It carries out the reaction tRNA(Ile) + L-isoleucine + ATP = L-isoleucyl-tRNA(Ile) + AMP + diphosphate. In terms of biological role, catalyzes the attachment of isoleucine to tRNA(Ile). As IleRS can inadvertently accommodate and process structurally similar amino acids such as valine, to avoid such errors it has two additional distinct tRNA(Ile)-dependent editing activities. One activity is designated as 'pretransfer' editing and involves the hydrolysis of activated Val-AMP. The other activity is designated 'posttransfer' editing and involves deacylation of mischarged Val-tRNA(Ile). The chain is Isoleucine--tRNA ligase from Neisseria meningitidis serogroup B (strain ATCC BAA-335 / MC58).